The primary structure comprises 62 residues: Large ribosomal subunit protein uL30 (62 aa).

Belongs to the universal ribosomal protein uL30 family. In terms of assembly, part of the 50S ribosomal subunit.

In Staphylococcus carnosus (strain TM300), this protein is Large ribosomal subunit protein uL30.